A 463-amino-acid chain; its full sequence is Cysteine--tRNA ligase (463 aa).

Cysteine 33 serves as a coordination point for Zn(2+). The 'HIGH' region motif lies at 35-45 (PTVYDFAHIGN). Zn(2+) contacts are provided by cysteine 221, histidine 246, and glutamate 250. Positions 279 to 283 (KMSKS) match the 'KMSKS' region motif. Lysine 282 is a binding site for ATP.

The protein belongs to the class-I aminoacyl-tRNA synthetase family. In terms of assembly, monomer. Zn(2+) is required as a cofactor.

The protein localises to the cytoplasm. The enzyme catalyses tRNA(Cys) + L-cysteine + ATP = L-cysteinyl-tRNA(Cys) + AMP + diphosphate. This chain is Cysteine--tRNA ligase, found in Rhizobium leguminosarum bv. trifolii (strain WSM2304).